Consider the following 123-residue polypeptide: Large-conductance mechanosensitive channel (123 aa).

Transmembrane regions (helical) follow at residues 14 to 34 (VIDM…VKSL) and 67 to 87 (GSFL…FLMV).

This sequence belongs to the MscL family. In terms of assembly, homopentamer.

The protein localises to the cell membrane. Its function is as follows. Channel that opens in response to stretch forces in the membrane lipid bilayer. May participate in the regulation of osmotic pressure changes within the cell. This is Large-conductance mechanosensitive channel from Limosilactobacillus reuteri (strain DSM 20016) (Lactobacillus reuteri).